Here is a 354-residue protein sequence, read N- to C-terminus: Lipoyl synthase, mitochondrial (354 aa).

[4Fe-4S] cluster is bound by residues Cys91, Cys96, Cys102, Cys122, Cys126, Cys129, and Ser337. The Radical SAM core domain occupies 107-326 (DDSLATATIM…AEYSKKLGFL (220 aa)).

Belongs to the radical SAM superfamily. Lipoyl synthase family. [4Fe-4S] cluster serves as cofactor.

Its subcellular location is the mitochondrion. The catalysed reaction is [[Fe-S] cluster scaffold protein carrying a second [4Fe-4S](2+) cluster] + N(6)-octanoyl-L-lysyl-[protein] + 2 oxidized [2Fe-2S]-[ferredoxin] + 2 S-adenosyl-L-methionine + 4 H(+) = [[Fe-S] cluster scaffold protein] + N(6)-[(R)-dihydrolipoyl]-L-lysyl-[protein] + 4 Fe(3+) + 2 hydrogen sulfide + 2 5'-deoxyadenosine + 2 L-methionine + 2 reduced [2Fe-2S]-[ferredoxin]. Its pathway is protein modification; protein lipoylation via endogenous pathway; protein N(6)-(lipoyl)lysine from octanoyl-[acyl-carrier-protein]: step 2/2. In terms of biological role, catalyzes the radical-mediated insertion of two sulfur atoms into the C-6 and C-8 positions of the octanoyl moiety bound to the lipoyl domains of lipoate-dependent enzymes, thereby converting the octanoylated domains into lipoylated derivatives. The sequence is that of Lipoyl synthase, mitochondrial from Caenorhabditis elegans.